A 491-amino-acid chain; its full sequence is Argininosuccinate lyase (491 aa).

It belongs to the lyase 1 family. Argininosuccinate lyase subfamily.

Its subcellular location is the cytoplasm. The catalysed reaction is 2-(N(omega)-L-arginino)succinate = fumarate + L-arginine. It participates in amino-acid biosynthesis; L-arginine biosynthesis; L-arginine from L-ornithine and carbamoyl phosphate: step 3/3. The polypeptide is Argininosuccinate lyase (Methanosarcina mazei (strain ATCC BAA-159 / DSM 3647 / Goe1 / Go1 / JCM 11833 / OCM 88) (Methanosarcina frisia)).